Here is a 367-residue protein sequence, read N- to C-terminus: Alanine racemase (367 aa).

The Proton acceptor; specific for D-alanine role is filled by Lys40. An N6-(pyridoxal phosphate)lysine modification is found at Lys40. Arg136 contacts substrate. Tyr263 (proton acceptor; specific for L-alanine) is an active-site residue. Position 310 (Met310) interacts with substrate.

The protein belongs to the alanine racemase family. The cofactor is pyridoxal 5'-phosphate.

The enzyme catalyses L-alanine = D-alanine. It participates in amino-acid biosynthesis; D-alanine biosynthesis; D-alanine from L-alanine: step 1/1. Its function is as follows. Catalyzes the interconversion of L-alanine and D-alanine. May also act on other amino acids. In Streptococcus pneumoniae (strain Taiwan19F-14), this protein is Alanine racemase (alr).